An 873-amino-acid chain; its full sequence is Leucine--tRNA ligase (873 aa).

A 'HIGH' region motif is present at residues P42–H52. Positions P624–P643 are disordered. The short motif at K632–S636 is the 'KMSKS' region element. Residue K635 participates in ATP binding.

The protein belongs to the class-I aminoacyl-tRNA synthetase family.

The protein resides in the cytoplasm. It carries out the reaction tRNA(Leu) + L-leucine + ATP = L-leucyl-tRNA(Leu) + AMP + diphosphate. The polypeptide is Leucine--tRNA ligase (Pseudomonas aeruginosa (strain LESB58)).